Here is a 270-residue protein sequence, read N- to C-terminus: Aliphatic sulfonates import ATP-binding protein SsuB (270 aa).

The ABC transporter domain occupies 17-238 (LASSGLRKTF…ARGSHRLAAL (222 aa)). 49-56 (GRSGCGKS) contributes to the ATP binding site. Residues 249-270 (APGAAPEPDPVAPLPTQLRWAH) form a disordered region.

This sequence belongs to the ABC transporter superfamily. Aliphatic sulfonates importer (TC 3.A.1.17.2) family. As to quaternary structure, the complex is composed of two ATP-binding proteins (SsuB), two transmembrane proteins (SsuC) and a solute-binding protein (SsuA).

It is found in the cell inner membrane. It catalyses the reaction ATP + H2O + aliphatic sulfonate-[sulfonate-binding protein]Side 1 = ADP + phosphate + aliphatic sulfonateSide 2 + [sulfonate-binding protein]Side 1.. Functionally, part of the ABC transporter complex SsuABC involved in aliphatic sulfonates import. Responsible for energy coupling to the transport system. This Pseudomonas putida (Arthrobacter siderocapsulatus) protein is Aliphatic sulfonates import ATP-binding protein SsuB.